The chain runs to 65 residues: Light-harvesting protein B800/830/1020 beta-2 chain (65 aa).

Residues 1-17 are Cytoplasmic-facing; that stretch reads TDIRTGLTDEECQEIHE. A bacteriochlorophyll is bound by residues H16 and N34. A helical transmembrane segment spans residues 18–40; sequence MNMLGMHAYWSIGLIANALAYAW. The Periplasmic segment spans residues 41–65; it reads RPFHQGRAGNRLEDHAPDYVRSALT.

Belongs to the antenna complex beta subunit family. As to quaternary structure, the core complex is formed by different alpha and beta chains, binding bacteriochlorophyll molecules, and arranged most probably in tetrameric structures disposed around the reaction center. The non-pigmented gamma chains may constitute additional components.

The protein resides in the cell inner membrane. Functionally, antenna complexes are light-harvesting systems, which transfer the excitation energy to the reaction centers. The sequence is that of Light-harvesting protein B800/830/1020 beta-2 chain from Halorhodospira halochloris (Ectothiorhodospira halochloris).